Consider the following 258-residue polypeptide: Thiazole synthase (258 aa).

The active-site Schiff-base intermediate with DXP is lysine 98. Residues glycine 159, alanine 185–glycine 186, and asparagine 207–threonine 208 contribute to the 1-deoxy-D-xylulose 5-phosphate site.

It belongs to the ThiG family. As to quaternary structure, homotetramer. Forms heterodimers with either ThiH or ThiS.

Its subcellular location is the cytoplasm. The catalysed reaction is [ThiS sulfur-carrier protein]-C-terminal-Gly-aminoethanethioate + 2-iminoacetate + 1-deoxy-D-xylulose 5-phosphate = [ThiS sulfur-carrier protein]-C-terminal Gly-Gly + 2-[(2R,5Z)-2-carboxy-4-methylthiazol-5(2H)-ylidene]ethyl phosphate + 2 H2O + H(+). It functions in the pathway cofactor biosynthesis; thiamine diphosphate biosynthesis. Its function is as follows. Catalyzes the rearrangement of 1-deoxy-D-xylulose 5-phosphate (DXP) to produce the thiazole phosphate moiety of thiamine. Sulfur is provided by the thiocarboxylate moiety of the carrier protein ThiS. In vitro, sulfur can be provided by H(2)S. The protein is Thiazole synthase of Bacillus cereus (strain ATCC 14579 / DSM 31 / CCUG 7414 / JCM 2152 / NBRC 15305 / NCIMB 9373 / NCTC 2599 / NRRL B-3711).